Reading from the N-terminus, the 488-residue chain is NADH-ubiquinone oxidoreductase chain 2 (488 aa).

14 helical membrane passes run 11-31 (MIKY…SISI), 38-58 (MMLL…LLTI), 74-94 (ELIT…ISMF), 106-126 (ITEE…ISME), 129-149 (NLIT…ILAL), 162-182 (LKYY…IVSI), 211-231 (IALI…HGWL), 239-259 (GMLM…IVLI), 271-291 (IEVI…VGTV), 299-319 (VIRF…LFFV), 331-351 (IYYL…IIGV), 376-396 (IGIS…FTNF), 412-434 (IYIT…NVVK), and 460-480 (IVGG…IISI).

Belongs to the complex I subunit 2 family.

It is found in the mitochondrion inner membrane. It carries out the reaction a ubiquinone + NADH + 5 H(+)(in) = a ubiquinol + NAD(+) + 4 H(+)(out). Its function is as follows. Core subunit of the mitochondrial membrane respiratory chain NADH dehydrogenase (Complex I) that is believed to belong to the minimal assembly required for catalysis. Complex I functions in the transfer of electrons from NADH to the respiratory chain. The immediate electron acceptor for the enzyme is believed to be ubiquinone. The chain is NADH-ubiquinone oxidoreductase chain 2 (nad2) from Dictyostelium discoideum (Social amoeba).